Here is a 101-residue protein sequence, read N- to C-terminus: Small ribosomal subunit protein uS14 (101 aa).

The protein belongs to the universal ribosomal protein uS14 family. As to quaternary structure, part of the 30S ribosomal subunit. Contacts proteins S3 and S10.

Binds 16S rRNA, required for the assembly of 30S particles and may also be responsible for determining the conformation of the 16S rRNA at the A site. The sequence is that of Small ribosomal subunit protein uS14 from Brucella anthropi (strain ATCC 49188 / DSM 6882 / CCUG 24695 / JCM 21032 / LMG 3331 / NBRC 15819 / NCTC 12168 / Alc 37) (Ochrobactrum anthropi).